The primary structure comprises 158 residues: 2-C-methyl-D-erythritol 2,4-cyclodiphosphate synthase (158 aa).

Asp-9 and His-11 together coordinate a divalent metal cation. 4-CDP-2-C-methyl-D-erythritol 2-phosphate contacts are provided by residues Asp-9–His-11 and His-35–Ser-36. A divalent metal cation is bound at residue His-43. Residues Asp-57–Gly-59, Phe-62–Asp-66, Thr-133–Glu-136, Phe-140, and Arg-143 contribute to the 4-CDP-2-C-methyl-D-erythritol 2-phosphate site.

It belongs to the IspF family. In terms of assembly, homotrimer. The cofactor is a divalent metal cation.

It carries out the reaction 4-CDP-2-C-methyl-D-erythritol 2-phosphate = 2-C-methyl-D-erythritol 2,4-cyclic diphosphate + CMP. Its pathway is isoprenoid biosynthesis; isopentenyl diphosphate biosynthesis via DXP pathway; isopentenyl diphosphate from 1-deoxy-D-xylulose 5-phosphate: step 4/6. In terms of biological role, involved in the biosynthesis of isopentenyl diphosphate (IPP) and dimethylallyl diphosphate (DMAPP), two major building blocks of isoprenoid compounds. Catalyzes the conversion of 4-diphosphocytidyl-2-C-methyl-D-erythritol 2-phosphate (CDP-ME2P) to 2-C-methyl-D-erythritol 2,4-cyclodiphosphate (ME-CPP) with a corresponding release of cytidine 5-monophosphate (CMP). The chain is 2-C-methyl-D-erythritol 2,4-cyclodiphosphate synthase from Desulfitobacterium hafniense (strain DSM 10664 / DCB-2).